The chain runs to 284 residues: GTP cyclohydrolase MptA (284 aa).

This sequence belongs to the GTP cyclohydrolase IV family. In terms of assembly, homodimer. The cofactor is Fe(2+).

The catalysed reaction is GTP + H2O = 7,8-dihydroneopterin 2',3'-cyclic phosphate + formate + diphosphate + H(+). It participates in cofactor biosynthesis; 5,6,7,8-tetrahydromethanopterin biosynthesis. Converts GTP to 7,8-dihydro-D-neopterin 2',3'-cyclic phosphate, the first intermediate in the biosynthesis of coenzyme methanopterin. This chain is GTP cyclohydrolase MptA, found in Thermoplasma volcanium (strain ATCC 51530 / DSM 4299 / JCM 9571 / NBRC 15438 / GSS1).